Consider the following 343-residue polypeptide: Mas-related G-protein coupled receptor member F (343 aa).

Residues 1–44 lie on the Extracellular side of the membrane; sequence MAGNCSWEAHSTNQNKMCPGMSEALELYSRGFLTIEQIATLPPP. An N-linked (GlcNAc...) asparagine glycan is attached at asparagine 4. The helical transmembrane segment at 45 to 66 threads the bilayer; it reads AVTNYIFLLLCLCGLVGNGLVL. At 67–82 the chain is on the cytoplasmic side; it reads WFFGFSIKRTPFSIYF. Residues 83 to 104 form a helical membrane-spanning segment; sequence LHLASADGIYLFSKAVIALLNM. At 105–123 the chain is on the extracellular side; sequence GTFLGSFPDYVRRVSRIVG. A helical membrane pass occupies residues 124 to 144; sequence LCTFFAGVSLLPAISIERCVS. The Cytoplasmic portion of the chain corresponds to 145–160; the sequence is VIFPMWYWRRRPKRLS. The helical transmembrane segment at 161 to 181 threads the bilayer; the sequence is AGVCALLWLLSFLVTSIHNYF. At 182–198 the chain is on the extracellular side; that stretch reads CMFLGHEASGTACLNMD. Residues 199 to 220 traverse the membrane as a helical segment; sequence ISLGILLFFLFCPLMVLPCLAL. Topologically, residues 221–241 are cytoplasmic; it reads ILHVECRARRRQRSAKLNHVV. The helical transmembrane segment at 242–263 threads the bilayer; the sequence is LAIVSVFLVSSIYLGIDWFLFW. Over 264–273 the chain is Extracellular; it reads VFQIPAPFPE. A helical membrane pass occupies residues 274 to 294; the sequence is YVTDLCICINSSAKPIVYFLA. Residues 295–343 lie on the Cytoplasmic side of the membrane; the sequence is GRDKSQRLWEPLRVVFQRALRDGAEPGDAASSTPNTVTMEMQCPSGNAS. The segment at 318 to 343 is disordered; that stretch reads AEPGDAASSTPNTVTMEMQCPSGNAS. A compositionally biased stretch (polar residues) spans 324 to 343; it reads ASSTPNTVTMEMQCPSGNAS.

Belongs to the G-protein coupled receptor 1 family. Mas subfamily. As to expression, gut, vas deferens, uterus and aorta; barely detectable in liver, kidney, lung, and salivary gland. In the brain, markedly abundant in the cerebellum.

The protein localises to the cell membrane. Orphan receptor. May bind to a neuropeptide and may regulate nociceptor function and/or development, including the sensation or modulation of pain. In Rattus norvegicus (Rat), this protein is Mas-related G-protein coupled receptor member F (Mrgprf).